The sequence spans 215 residues: uncharacterized protein (215 aa).

This is an uncharacterized protein from Saccharomyces cerevisiae (strain ATCC 204508 / S288c) (Baker's yeast).